We begin with the raw amino-acid sequence, 76 residues long: Alpha/kappa-conotoxin-like pl14.1 (76 aa).

A signal peptide spans 1 to 27 (MPSVRSVTCCCLLWMMLSVQLVTPGSP). A propeptide spanning residues 28–39 (ATAQLSGQRTAR) is cleaved from the precursor. Intrachain disulfides connect cysteine 46-cysteine 61 and cysteine 50-cysteine 63. Asparagine 64 carries the asparagine amide modification. Residues 65-76 (GKRDVVSSSMAV) constitute a propeptide that is removed on maturation.

It belongs to the conotoxin J superfamily. As to expression, expressed by the venom duct.

Its subcellular location is the secreted. Highly inhibits both nicotinic acetylcholine receptors (neuronal (alpha-3/beta-4) and muscular (alpha-1/beta-1/epsilon/delta) subtypes) and the voltage-gated potassium channel Kv1.6/KCNA6 subtype. This Conus planorbis (Planorbis cone) protein is Alpha/kappa-conotoxin-like pl14.1.